We begin with the raw amino-acid sequence, 507 residues long: ATP synthase subunit alpha, chloroplastic (507 aa).

170 to 177 (GDRQTGKT) lines the ATP pocket.

The protein belongs to the ATPase alpha/beta chains family. In terms of assembly, F-type ATPases have 2 components, CF(1) - the catalytic core - and CF(0) - the membrane proton channel. CF(1) has five subunits: alpha(3), beta(3), gamma(1), delta(1), epsilon(1). CF(0) has four main subunits: a, b, b' and c.

Its subcellular location is the plastid. It is found in the chloroplast thylakoid membrane. It catalyses the reaction ATP + H2O + 4 H(+)(in) = ADP + phosphate + 5 H(+)(out). Produces ATP from ADP in the presence of a proton gradient across the membrane. The alpha chain is a regulatory subunit. The protein is ATP synthase subunit alpha, chloroplastic of Solanum bulbocastanum (Wild potato).